Reading from the N-terminus, the 266-residue chain is 4-hydroxy-tetrahydrodipicolinate reductase (266 aa).

10–15 provides a ligand contact to NAD(+); sequence GPRGRM. Lys-38 serves as a coordination point for NADP(+). NAD(+) contacts are provided by residues 99–101 and 125–128; these read GTT and APNF. The active-site Proton donor/acceptor is His-155. Residue His-156 coordinates (S)-2,3,4,5-tetrahydrodipicolinate. Lys-159 acts as the Proton donor in catalysis. A (S)-2,3,4,5-tetrahydrodipicolinate-binding site is contributed by 165–166; it reads GT.

This sequence belongs to the DapB family.

It localises to the cytoplasm. It catalyses the reaction (S)-2,3,4,5-tetrahydrodipicolinate + NAD(+) + H2O = (2S,4S)-4-hydroxy-2,3,4,5-tetrahydrodipicolinate + NADH + H(+). The enzyme catalyses (S)-2,3,4,5-tetrahydrodipicolinate + NADP(+) + H2O = (2S,4S)-4-hydroxy-2,3,4,5-tetrahydrodipicolinate + NADPH + H(+). Its pathway is amino-acid biosynthesis; L-lysine biosynthesis via DAP pathway; (S)-tetrahydrodipicolinate from L-aspartate: step 4/4. Its function is as follows. Catalyzes the conversion of 4-hydroxy-tetrahydrodipicolinate (HTPA) to tetrahydrodipicolinate. This chain is 4-hydroxy-tetrahydrodipicolinate reductase, found in Bacillus cereus (strain B4264).